A 150-amino-acid chain; its full sequence is UPF0208 membrane protein VP2081 (150 aa).

Transmembrane regions (helical) follow at residues 42 to 62 (FGIK…MAFN) and 70 to 90 (SIVV…WLGA).

It belongs to the UPF0208 family.

It is found in the cell inner membrane. This Vibrio parahaemolyticus serotype O3:K6 (strain RIMD 2210633) protein is UPF0208 membrane protein VP2081.